Reading from the N-terminus, the 105-residue chain is Iron-sulfur cluster assembly protein CyaY (105 aa).

Belongs to the frataxin family.

Involved in iron-sulfur (Fe-S) cluster assembly. May act as a regulator of Fe-S biogenesis. This is Iron-sulfur cluster assembly protein CyaY from Chromobacterium violaceum (strain ATCC 12472 / DSM 30191 / JCM 1249 / CCUG 213 / NBRC 12614 / NCIMB 9131 / NCTC 9757 / MK).